An 830-amino-acid polypeptide reads, in one-letter code: DNA replication licensing factor MCM6 (830 aa).

A C4-type zinc finger spans residues 159–186 (CLDCGNVVKNVEQQFKYTEPIICVNATC). One can recognise an MCM domain in the interval 349 to 555 (FFNKIVDSIC…NTDYHIAHHI (207 aa)). An ATP-binding site is contributed by 399-406 (GDPSCAKS). The Arginine finger signature appears at 531–534 (SRFD). The segment at 671–710 (DFQDADDGTNVPADNDAGQPTEMDAAPQQDGPENEQAADT) is disordered.

Belongs to the MCM family. Component of the minichromosome maintenance (MCM) complex, a heterotetramer composed of MCM2, MCM3, MCM4, MCM5, MCM6 and MCM7.

It localises to the nucleus. The enzyme catalyses ATP + H2O = ADP + phosphate + H(+). In terms of biological role, probable component of the MCM2-7 complex (MCM complex) that may function as a DNA helicase and which is essential to undergo a single round of replication initiation and elongation per cell cycle in eukaryotic cells. This chain is DNA replication licensing factor MCM6 (MCM6), found in Oryza sativa subsp. indica (Rice).